A 210-amino-acid chain; its full sequence is Fibroblast growth factor 8 (210 aa).

The first 27 residues, 1-27, serve as a signal peptide directing secretion; it reads MRLIPSRLSYLFLHLFAFCYYAQVTIQ.

Belongs to the heparin-binding growth factors family. As to quaternary structure, monomer. Homodimer.

Its subcellular location is the secreted. Its function is as follows. Plays an important role in the regulation of embryonic development, cell proliferation, cell differentiation and cell migration. Required for Kupffer's vesicle ciliogenesis. The chain is Fibroblast growth factor 8 from Danio rerio (Zebrafish).